Consider the following 405-residue polypeptide: Molybdopterin molybdenumtransferase 2 (405 aa).

It belongs to the MoeA family. It depends on Mg(2+) as a cofactor.

It carries out the reaction adenylyl-molybdopterin + molybdate = Mo-molybdopterin + AMP + H(+). It participates in cofactor biosynthesis; molybdopterin biosynthesis. Its function is as follows. Catalyzes the insertion of molybdate into adenylated molybdopterin with the concomitant release of AMP. This Mycobacterium tuberculosis (strain CDC 1551 / Oshkosh) protein is Molybdopterin molybdenumtransferase 2 (moaE2).